An 873-amino-acid chain; its full sequence is Nitrate reductase [NADPH] (873 aa).

The interval 30-61 (TELDTADIPLPPPSKEPTEVLSLDKTTPDSHV) is disordered. Residue Cys-150 participates in Mo-molybdopterin binding. The 76-residue stretch at 512–587 (TRIIDLEEFK…MPDYHIGTLD (76 aa)) folds into the Cytochrome b5 heme-binding domain. His-547 and His-570 together coordinate heme. An FAD-binding FR-type domain is found at 616–729 (KAWTKATLTK…KGPTGRFEYL (114 aa)). FAD is bound by residues 672–675 (RSYT), 689–693 (LIKIY), 703–705 (KMT), and Thr-756. 843 to 852 (MVLVCGPEAM) contacts NADP(+).

Belongs to the nitrate reductase family. Homodimer. FAD serves as cofactor. Requires heme as cofactor. Mo-molybdopterin is required as a cofactor.

The catalysed reaction is nitrite + NADP(+) + H2O = nitrate + NADPH + H(+). Nitrate reductase is a key enzyme involved in the first step of nitrate assimilation in plants, fungi and bacteria. The chain is Nitrate reductase [NADPH] (niaD) from Emericella nidulans (strain FGSC A4 / ATCC 38163 / CBS 112.46 / NRRL 194 / M139) (Aspergillus nidulans).